The chain runs to 143 residues: Large ribosomal subunit protein uL11 (143 aa).

This sequence belongs to the universal ribosomal protein uL11 family. Part of the ribosomal stalk of the 50S ribosomal subunit. Interacts with L10 and the large rRNA to form the base of the stalk. L10 forms an elongated spine to which L12 dimers bind in a sequential fashion forming a multimeric L10(L12)X complex. In terms of processing, one or more lysine residues are methylated.

In terms of biological role, forms part of the ribosomal stalk which helps the ribosome interact with GTP-bound translation factors. This is Large ribosomal subunit protein uL11 from Variovorax paradoxus (strain S110).